We begin with the raw amino-acid sequence, 302 residues long: MAGRVREVSHSSDQSGRLPAAFLRPGSSSFTDFVREYSPEILPATRTLPAAAALPGGGPGAGEPPHATTIVALVFADGVVMAGDRRATAGPMIAQRDIQKVFQTDEHSCAGIAGTAGLAVEMIRLFQVELEHFEKLEGTLMSFEGKANRLSTMIRANLGMAMQGLAVVPLFAGYDLDAGRGRIVGYDITGGRSEEHDHHTVGSGSLFARGSLKKLYRPGMSEAETVRVALEALWDAADDDSATGGPDLLRKIWPVVGVTTAEGYRRVPDAELEPVVEAVVAGRRGNPGGNPGISAVHGDGGN.

Over residues 1 to 10 the composition is skewed to basic and acidic residues; the sequence is MAGRVREVSH. The interval 1 to 21 is disordered; the sequence is MAGRVREVSHSSDQSGRLPAA. Positions 1–67 are cleaved as a propeptide — removed in mature form; by autocatalysis; sequence MAGRVREVSH…GPGAGEPPHA (67 aa). Residue T68 is the Nucleophile of the active site. The interval 283-302 is disordered; sequence RRGNPGGNPGISAVHGDGGN.

This sequence belongs to the peptidase T1B family. As to quaternary structure, the 20S proteasome core is composed of 14 alpha and 14 beta subunits that assemble into four stacked heptameric rings, resulting in a barrel-shaped structure. The two inner rings, each composed of seven catalytic beta subunits, are sandwiched by two outer rings, each composed of seven alpha subunits. The catalytic chamber with the active sites is on the inside of the barrel. Has a gated structure, the ends of the cylinder being occluded by the N-termini of the alpha-subunits. Is capped by the proteasome-associated ATPase, ARC.

The protein resides in the cytoplasm. The catalysed reaction is Cleavage of peptide bonds with very broad specificity.. The protein operates within protein degradation; proteasomal Pup-dependent pathway. The formation of the proteasomal ATPase ARC-20S proteasome complex, likely via the docking of the C-termini of ARC into the intersubunit pockets in the alpha-rings, may trigger opening of the gate for substrate entry. Interconversion between the open-gate and close-gate conformations leads to a dynamic regulation of the 20S proteasome proteolysis activity. Component of the proteasome core, a large protease complex with broad specificity involved in protein degradation. The sequence is that of Proteasome subunit beta from Kineococcus radiotolerans (strain ATCC BAA-149 / DSM 14245 / SRS30216).